A 425-amino-acid chain; its full sequence is Oxytetracycline polyketide putative beta-ketoacyl synthase 1 (425 aa).

Positions 7–420 (ARRVVITGIG…GFQSAIVLTE (414 aa)) constitute a Ketosynthase family 3 (KS3) domain. Catalysis depends on for beta-ketoacyl synthase activity residues Cys-173, His-313, and His-350.

Belongs to the thiolase-like superfamily. Beta-ketoacyl-ACP synthases family.

It functions in the pathway antibiotic biosynthesis; oxytetracycline biosynthesis. This Streptomyces rimosus protein is Oxytetracycline polyketide putative beta-ketoacyl synthase 1.